Here is a 340-residue protein sequence, read N- to C-terminus: tRNA N6-adenosine threonylcarbamoyltransferase (340 aa).

Residues histidine 115 and histidine 119 each contribute to the Fe cation site. Substrate is bound by residues 138–142 (VVSGG), aspartate 171, glycine 184, aspartate 188, and asparagine 278. Fe cation is bound at residue aspartate 306.

Belongs to the KAE1 / TsaD family. It depends on Fe(2+) as a cofactor.

The protein resides in the cytoplasm. The enzyme catalyses L-threonylcarbamoyladenylate + adenosine(37) in tRNA = N(6)-L-threonylcarbamoyladenosine(37) in tRNA + AMP + H(+). Functionally, required for the formation of a threonylcarbamoyl group on adenosine at position 37 (t(6)A37) in tRNAs that read codons beginning with adenine. Is involved in the transfer of the threonylcarbamoyl moiety of threonylcarbamoyl-AMP (TC-AMP) to the N6 group of A37, together with TsaE and TsaB. TsaD likely plays a direct catalytic role in this reaction. The polypeptide is tRNA N6-adenosine threonylcarbamoyltransferase (Clostridium botulinum (strain 657 / Type Ba4)).